The chain runs to 478 residues: Dihydrolipoyl dehydrogenase (478 aa).

Residues 34-49 (EKYIGKEGKVALGGTC), K58, and G122 each bind FAD. The cysteines at positions 49 and 54 are disulfide-linked. Residues 188-192 (GAGVI), E211, V245, and 276-279 (AVGR) each bind NAD(+). FAD is bound by residues D319 and A327. The Proton acceptor role is filled by H451.

The protein belongs to the class-I pyridine nucleotide-disulfide oxidoreductase family. As to quaternary structure, homodimer. FAD serves as cofactor.

The protein localises to the cytoplasm. The enzyme catalyses N(6)-[(R)-dihydrolipoyl]-L-lysyl-[protein] + NAD(+) = N(6)-[(R)-lipoyl]-L-lysyl-[protein] + NADH + H(+). The branched-chain alpha-keto dehydrogenase complex catalyzes the overall conversion of alpha-keto acids to acyl-CoA and CO(2). It contains multiple copies of 3 enzymatic components: branched-chain alpha-keto acid decarboxylase (E1), lipoamide acyltransferase (E2) and lipoamide dehydrogenase (E3). The protein is Dihydrolipoyl dehydrogenase (lpd) of Pseudomonas fluorescens.